The sequence spans 223 residues: Proteinase inhibitor type-2 TR8 (223 aa).

Residues 1–24 (MAIYKVALLLLFGMILLASDFEHA) form the signal peptide. 3 consecutive repeat copies span residues 24-81 (AKAC…EWVS), 88-145 (KKAC…EWVS), and 152-209 (EKDC…EWVS). 8 disulfides stabilise this stretch: Cys27–Cys120, Cys31–Cys116, Cys40–Cys126, Cys52–Cys95, Cys55–Cys73, Cys56–Cys91, Cys62–Cys104, and Cys119–Cys137.

Belongs to the protease inhibitor I20 (potato type II proteinase inhibitor) family.

The sequence is that of Proteinase inhibitor type-2 TR8 (ARPI) from Solanum lycopersicum (Tomato).